Here is a 571-residue protein sequence, read N- to C-terminus: Ubiquitin-like-specific protease 1C (571 aa).

The segment at 221–260 is disordered; that stretch reads SESKDPKGDRRPNEAYGKGKPNESSPYLLVDDDDGDDDKV. Residues 222 to 233 are compositionally biased toward basic and acidic residues; the sequence is ESKDPKGDRRPN. Catalysis depends on residues H426, D449, and C512.

Belongs to the peptidase C48 family.

Its subcellular location is the nucleus. It is found in the nucleoplasm. Functionally, protease that catalyzes two essential functions in the SUMO pathway: processing of full-length SUMOs to their mature forms and deconjugation of SUMO from targeted proteins. Cleaves precursors of SUM1 and SUM2, but not of SUM3 or SUM5. Able to release SUM1 and SUM2 from conjugates, but unable to cleave SUM3. Protease activity mainly directed at deconjugating SUM1 and SUM2 from their target proteins. Regulates salt stress responses and flowering time. Redundant with ULP1D. The sequence is that of Ubiquitin-like-specific protease 1C (ULP1C) from Arabidopsis thaliana (Mouse-ear cress).